The primary structure comprises 480 residues: ATP synthase subunit beta 1 (480 aa).

154 to 161 (GGAGVGKT) provides a ligand contact to ATP.

It belongs to the ATPase alpha/beta chains family. As to quaternary structure, F-type ATPases have 2 components, CF(1) - the catalytic core - and CF(0) - the membrane proton channel. CF(1) has five subunits: alpha(3), beta(3), gamma(1), delta(1), epsilon(1). CF(0) has four main subunits: a(1), b(1), b'(1) and c(9-12).

It localises to the cell inner membrane. The catalysed reaction is ATP + H2O + 4 H(+)(in) = ADP + phosphate + 5 H(+)(out). Produces ATP from ADP in the presence of a proton gradient across the membrane. The catalytic sites are hosted primarily by the beta subunits. In Chlorobaculum tepidum (strain ATCC 49652 / DSM 12025 / NBRC 103806 / TLS) (Chlorobium tepidum), this protein is ATP synthase subunit beta 1.